The sequence spans 356 residues: CMP-sialic acid transporter 2 (356 aa).

Residues Met-1–Gly-24 show a composition bias toward basic and acidic residues. The disordered stretch occupies residues Met-1 to Ser-43. Residues Met-1 to Lys-52 are Cytoplasmic-facing. Over residues Ser-27–Ser-43 the composition is skewed to low complexity. The helical transmembrane segment at Ser-53–Ser-73 threads the bilayer. Residues Lys-74–Ser-82 lie on the Lumenal side of the membrane. A helical transmembrane segment spans residues Val-83–Tyr-103. Topologically, residues Arg-104–Ser-125 are cytoplasmic. A helical transmembrane segment spans residues Val-126–Ala-146. At Tyr-147–Asp-149 the chain is on the lumenal side. Residues Ala-150–Leu-172 form a helical membrane-spanning segment. Over Lys-173–Lys-175 the chain is Cytoplasmic. A helical transmembrane segment spans residues Leu-176–Leu-196. Topologically, residues Asn-197–Trp-211 are lumenal. The chain crosses the membrane as a helical span at residues Val-212–Ile-232. The Cytoplasmic segment spans residues Lys-233–Asn-239. The helical transmembrane segment at Ile-240–Cys-260 threads the bilayer. Topologically, residues Val-261–Ser-277 are lumenal. Residues Phe-278–Met-298 form a helical membrane-spanning segment. At Lys-299–Met-314 the chain is on the cytoplasmic side. Residues Leu-315 to Leu-335 form a helical membrane-spanning segment. Over Gly-336 to Lys-356 the chain is Lumenal.

It belongs to the nucleotide-sugar transporter family. CMP-Sialate:CMP antiporter (TC 2.A.7.12) subfamily.

The protein localises to the golgi apparatus membrane. Functionally, sugar transporter involved in the transport of CMP-sialic acid from the cytoplasm into the Golgi. May transport important nucleotide sugars such as CMP-Kdo (2-keto-3-deoxy-D-manno-octulosonic acid) in physiological conditions. In Oryza sativa subsp. indica (Rice), this protein is CMP-sialic acid transporter 2.